The sequence spans 403 residues: Dihydroorotase (403 aa).

Zn(2+) contacts are provided by histidine 48 and histidine 50. Residues 50–52 (HLR) and asparagine 82 contribute to the substrate site. The Zn(2+) site is built by glutamate 140, histidine 172, histidine 211, and aspartate 277. Aspartate 277 is a catalytic residue. Histidine 281 lines the substrate pocket.

Belongs to the metallo-dependent hydrolases superfamily. DHOase family. Class I DHOase subfamily. Zn(2+) serves as cofactor.

It carries out the reaction (S)-dihydroorotate + H2O = N-carbamoyl-L-aspartate + H(+). Its pathway is pyrimidine metabolism; UMP biosynthesis via de novo pathway; (S)-dihydroorotate from bicarbonate: step 3/3. Catalyzes the reversible cyclization of carbamoyl aspartate to dihydroorotate. The chain is Dihydroorotase from Archaeoglobus fulgidus (strain ATCC 49558 / DSM 4304 / JCM 9628 / NBRC 100126 / VC-16).